The following is a 33-amino-acid chain: Brevinin-2JD (33 aa).

Cysteine 27 and cysteine 33 are disulfide-bonded.

As to expression, expressed by the skin glands.

Its subcellular location is the secreted. In terms of biological role, has antibacterial activity against E.coli ATCC 25992 (MIC=38 uM), E.coli CIB 84492 (MIC=38 uM), S.aureus ATCC 25923 (MIC=19 uM) and S.aureus CIB 85462 (MIC=19 uM). Has antifungal activity against C.albicans (MIC=19 uM). Has weak hemolytic activity against rabbit erythrocytes. The polypeptide is Brevinin-2JD (Odorrana jingdongensis (Jingdong frog)).